The chain runs to 374 residues: Anhydro-N-acetylmuramic acid kinase (374 aa).

12–19 (GTSLDGID) lines the ATP pocket.

The protein belongs to the anhydro-N-acetylmuramic acid kinase family.

The catalysed reaction is 1,6-anhydro-N-acetyl-beta-muramate + ATP + H2O = N-acetyl-D-muramate 6-phosphate + ADP + H(+). Its pathway is amino-sugar metabolism; 1,6-anhydro-N-acetylmuramate degradation. It participates in cell wall biogenesis; peptidoglycan recycling. Its function is as follows. Catalyzes the specific phosphorylation of 1,6-anhydro-N-acetylmuramic acid (anhMurNAc) with the simultaneous cleavage of the 1,6-anhydro ring, generating MurNAc-6-P. Is required for the utilization of anhMurNAc either imported from the medium or derived from its own cell wall murein, and thus plays a role in cell wall recycling. The protein is Anhydro-N-acetylmuramic acid kinase of Sodalis glossinidius (strain morsitans).